The following is a 597-amino-acid chain: Arginine--tRNA ligase (597 aa).

Positions 137–147 (PNIAKEMHVGH) match the 'HIGH' region motif.

The protein belongs to the class-I aminoacyl-tRNA synthetase family. In terms of assembly, monomer.

The protein localises to the cytoplasm. The catalysed reaction is tRNA(Arg) + L-arginine + ATP = L-arginyl-tRNA(Arg) + AMP + diphosphate. In Parasynechococcus marenigrum (strain WH8102), this protein is Arginine--tRNA ligase.